Consider the following 173-residue polypeptide: Crossover junction endodeoxyribonuclease RuvC (173 aa).

Active-site residues include Asp8, Glu69, and Asp141. The Mg(2+) site is built by Asp8, Glu69, and Asp141.

Belongs to the RuvC family. Homodimer which binds Holliday junction (HJ) DNA. The HJ becomes 2-fold symmetrical on binding to RuvC with unstacked arms; it has a different conformation from HJ DNA in complex with RuvA. In the full resolvosome a probable DNA-RuvA(4)-RuvB(12)-RuvC(2) complex forms which resolves the HJ. Mg(2+) is required as a cofactor.

It localises to the cytoplasm. It carries out the reaction Endonucleolytic cleavage at a junction such as a reciprocal single-stranded crossover between two homologous DNA duplexes (Holliday junction).. Functionally, the RuvA-RuvB-RuvC complex processes Holliday junction (HJ) DNA during genetic recombination and DNA repair. Endonuclease that resolves HJ intermediates. Cleaves cruciform DNA by making single-stranded nicks across the HJ at symmetrical positions within the homologous arms, yielding a 5'-phosphate and a 3'-hydroxyl group; requires a central core of homology in the junction. The consensus cleavage sequence is 5'-(A/T)TT(C/G)-3'. Cleavage occurs on the 3'-side of the TT dinucleotide at the point of strand exchange. HJ branch migration catalyzed by RuvA-RuvB allows RuvC to scan DNA until it finds its consensus sequence, where it cleaves and resolves the cruciform DNA. The sequence is that of Crossover junction endodeoxyribonuclease RuvC from Xylella fastidiosa (strain 9a5c).